The sequence spans 1684 residues: A-kinase anchor protein 12 (1684 aa).

The tract at residues 1–124 (MGAGSSTEQR…DITKDEQEET (124 aa)) is disordered. Gly2 is lipidated: N-myristoyl glycine. Phosphoserine occurs at positions 11, 18, 22, and 27. The segment covering 30–48 (GPAAEASGAAGDPADADPA) has biased composition (low complexity). A compositionally biased stretch (acidic residues) spans 75–86 (ESQDGQEEEVTV). The segment covering 89-105 (VGQRESEDVKEKDRAKE) has biased composition (basic and acidic residues). Residue Ser136 is modified to Phosphoserine. Disordered regions lie at residues 175–281 (SDTV…ETTS) and 296–353 (KKTS…SADY). Over residues 212 to 227 (ASKESELKQSTEKQEG) the composition is skewed to basic and acidic residues. The span at 228 to 247 (TLKQAQSSTEIPLQAESGQG) shows a compositional bias: polar residues. Residues Ser234 and Ser244 each carry the phosphoserine modification. Residues 251-266 (EAAKDGEENREKEPTK) are compositionally biased toward basic and acidic residues. The tract at residues 253-543 (AKDGEENREK…QHIQTESPES (291 aa)) is involved in PKC-binding. Residues Ser270 and Ser273 each carry the phosphoserine modification. The segment covering 270 to 281 (SPTSPVSNETTS) has biased composition (polar residues). Residues 302–320 (KPKEDDLETSEKRKEQEAE) are compositionally biased toward basic and acidic residues. Over residues 321 to 342 (KVDEEEGEKTEPAPAEEQEPAE) the composition is skewed to acidic residues. Thr330 carries the post-translational modification Phosphothreonine. Phosphoserine is present on Ser350. Position 353 is a phosphotyrosine (Tyr353). A phosphoserine mark is found at Ser371 and Ser467. Positions 421-479 (GSGESLPPEKLAETQEVPQEAEPVEELMKTKEVCVSGGDHTQLTDLSPEEKMLPKHPEG) are disordered. Basic and acidic residues predominate over residues 468-478 (PEEKMLPKHPE). 3 positions are modified to phosphoserine: Ser489, Ser505, and Ser507. Residues 492–825 (RIKVQGSPLK…INEDDPDVPA (334 aa)) are disordered. Residues 497 to 511 (GSPLKKLFSSSGLKK) show a composition bias toward low complexity. Positions 512 to 521 (LSGKKQKGKR) are enriched in basic residues. Ser540, Ser543, Ser584, Ser598, Ser613, and Ser615 each carry phosphoserine. An AKAP CaM-binding 1 motif is present at residues 593–613 (ITPWASFKKMVTPKKRVRRPS). A compositionally biased stretch (basic and acidic residues) spans 611–625 (RPSESDKEEELDKVK). Positions 626–637 (SATLSSTESTAS) are enriched in low complexity. Thr628 carries the post-translational modification Phosphothreonine. Residues Ser630, Ser631, Ser634, and Ser637 each carry the phosphoserine modification. The segment covering 641–660 (DEVRAVGEEQRSEEPKRRVD) has biased composition (basic and acidic residues). Residues Ser682, Ser683, and Ser684 each carry the phosphoserine modification. The span at 696 to 710 (DGHRAEEASKDKEAD) shows a compositional bias: basic and acidic residues. Over residues 714-723 (ASTQEQDQAH) the composition is skewed to polar residues. The segment covering 724–741 (GSSSPEPAGSPSEGEGVS) has biased composition (low complexity). Residues Ser733, Ser745, Ser767, and Ser786 each carry the phosphoserine modification. The AKAP CaM-binding 2 motif lies at 740-760 (VSTWESFKRLVTPRKKSKSKL). The AKAP CaM-binding 3 motif lies at 781–801 (EESWVSIKKFIPGRRKKRADG). A Phosphothreonine modification is found at Thr871. The residue at position 873 (Ser873) is a Phosphoserine. The interval 970–1001 (TEASGAEETTDMVSAVSQLSDSPDTTEEATPV) is disordered. Positions 980–992 (DMVSAVSQLSDSP) are enriched in polar residues. Lys1030 participates in a covalent cross-link: Glycyl lysine isopeptide (Lys-Gly) (interchain with G-Cter in SUMO1). 4 disordered regions span residues 1055-1106 (VEED…VTED), 1121-1211 (LMEQ…DVLE), 1232-1365 (EGEA…DKAD), and 1391-1492 (TVAT…REKI). Ser1059 is subject to Phosphoserine. Positions 1130–1176 (SSETLTDSETNGSTPLADSDTPNGTQQDETVDSQDSNAIAAVKQSQV) are enriched in polar residues. Composition is skewed to basic and acidic residues over residues 1198-1210 (QEEH…RDVL) and 1239-1254 (DGEK…ELEV). Ser1292 is subject to Phosphoserine. Residues 1293-1331 (PEKREMGTDVEKEETETKTEQASEEHEQETAAPEHEGTH) are compositionally biased toward basic and acidic residues. Phosphoserine occurs at positions 1351, 1355, and 1357. The segment covering 1467 to 1492 (QRSDEDNKPDAGPDAAGKESAAREKI) has biased composition (basic and acidic residues). An RII-binding region spans residues 1501–1514 (ELESKSNKIVQSVI). A phosphoserine mark is found at Ser1546 and Ser1645. The disordered stretch occupies residues 1568 to 1684 (TLSAVAQEGL…QEPKGDLTES (117 aa)). The segment covering 1653 to 1684 (LTEEGDALKEEMNKAQTEEDDLQEPKGDLTES) has biased composition (basic and acidic residues).

In terms of assembly, binds to dimeric RII-alpha regulatory subunit of PKC. In terms of tissue distribution, isoform 1 is predominantly found in the nervous system. Isoform 3 is testis specific.

It is found in the cytoplasm. The protein resides in the cytoskeleton. The protein localises to the membrane. In terms of biological role, anchoring protein that mediates the subcellular compartmentation of protein kinase A (PKA) and protein kinase C (PKC). This is A-kinase anchor protein 12 (Akap12) from Mus musculus (Mouse).